A 398-amino-acid polypeptide reads, in one-letter code: Ureide permease 2 (398 aa).

The Extracellular portion of the chain corresponds to 1 to 10 (MYLVESKGGA). The chain crosses the membrane as a helical span at residues 11–31 (IACMLLALLSLGTWPAVLTLL). Residues 32–44 (ERRGRLPQHTYLD) lie on the Cytoplasmic side of the membrane. The chain crosses the membrane as a helical span at residues 45–65 (YSITNLLAAIIIAFTFGQIGS). The Extracellular portion of the chain corresponds to 66–81 (TKPDSPNFITQLAQDN). A helical transmembrane segment spans residues 82–102 (WPSVMFAMAGGIVLSLGNLST). Residues 103–104 (QY) lie on the Cytoplasmic side of the membrane. The chain crosses the membrane as a helical span at residues 105-125 (AWALVGLSVTEVITSSITVVI). Residues 126 to 139 (GSTLNYFLDDKINK) lie on the Extracellular side of the membrane. Residues 140–160 (AEILFPGVACFLIAVCLGSAV) traverse the membrane as a helical segment. The Cytoplasmic portion of the chain corresponds to 161 to 229 (HRSNADDNKA…RAIKVFGKRK (69 aa)). The interval 176-200 (ETAKQEASGPSTEIGTNSSKDLETN) is disordered. Polar residues predominate over residues 183–200 (SGPSTEIGTNSSKDLETN). 221-228 (AIKVFGKR) contacts ATP. A helical transmembrane segment spans residues 230 to 250 (IIGLAITFFAGLCFSLFSPAF). At 251–272 (NLATNDQWNRLKQGVPKLVVYT) the chain is on the extracellular side. Residues 273–293 (AFFYFSVSCFIIALILNVVFL) form a helical membrane-spanning segment. Topologically, residues 294–315 (YYPVLGLPKSSFKAYLNDWNGR) are cytoplasmic. The helical transmembrane segment at 316-336 (YWAFLAGFLCGFGNGLQFMGG) threads the bilayer. Over 337 to 341 (QAAGY) the chain is Extracellular. A helical membrane pass occupies residues 342 to 362 (AAADSVQALPLVSTFWGVVLF). The Cytoplasmic portion of the chain corresponds to 363-371 (GEYRRSSRK). Residues 372–392 (TYLLLFCMLFMFISAVAVLMA) form a helical membrane-spanning segment. Topologically, residues 393-398 (SSGHRK) are extracellular.

This sequence belongs to the plant ureide permease (TC 2.A.7.19) family. As to expression, expressed in root xylem, cotyledons and leaves. Expressed in leaf blades, petioles, trichomes, stems, flower stigma, the upper part of pedicels, sepals, and the top and bottom parts of carpels in siliques.

The protein resides in the membrane. Proton-coupled transporter that transports a wide spectrum of oxo derivatives of heterocyclic nitrogen compounds, including allantoin, uric acid and xanthine, but not adenine. Mediates high affinity transport of uracil and 5-fluorouracil (a toxic uracil analog). Mediates transport of free pyrimidines and may function during early seedling development in salvage pathways, by the utilization of pyrimidines from seed storage tissue. The sequence is that of Ureide permease 2 from Arabidopsis thaliana (Mouse-ear cress).